The chain runs to 203 residues: Holliday junction branch migration complex subunit RuvA (203 aa).

The interval M1–V63 is domain I. Positions D64–A141 are domain II. Positions A141–A145 are flexible linker. The domain III stretch occupies residues V146–R203.

It belongs to the RuvA family. Homotetramer. Forms an RuvA(8)-RuvB(12)-Holliday junction (HJ) complex. HJ DNA is sandwiched between 2 RuvA tetramers; dsDNA enters through RuvA and exits via RuvB. An RuvB hexamer assembles on each DNA strand where it exits the tetramer. Each RuvB hexamer is contacted by two RuvA subunits (via domain III) on 2 adjacent RuvB subunits; this complex drives branch migration. In the full resolvosome a probable DNA-RuvA(4)-RuvB(12)-RuvC(2) complex forms which resolves the HJ.

The protein localises to the cytoplasm. Its function is as follows. The RuvA-RuvB-RuvC complex processes Holliday junction (HJ) DNA during genetic recombination and DNA repair, while the RuvA-RuvB complex plays an important role in the rescue of blocked DNA replication forks via replication fork reversal (RFR). RuvA specifically binds to HJ cruciform DNA, conferring on it an open structure. The RuvB hexamer acts as an ATP-dependent pump, pulling dsDNA into and through the RuvAB complex. HJ branch migration allows RuvC to scan DNA until it finds its consensus sequence, where it cleaves and resolves the cruciform DNA. The sequence is that of Holliday junction branch migration complex subunit RuvA from Streptomyces avermitilis (strain ATCC 31267 / DSM 46492 / JCM 5070 / NBRC 14893 / NCIMB 12804 / NRRL 8165 / MA-4680).